Here is a 173-residue protein sequence, read N- to C-terminus: Fimbrial protein PrsE (173 aa).

The signal sequence occupies residues 1–24 (MKKIRGLCLPVMLGAVLMSQHVHA).

It localises to the secreted. The protein resides in the fimbrium. Its function is as follows. Fimbriae (also called pili), polar filaments radiating from the surface of the bacterium to a length of 0.5-1.5 micrometers and numbering 100-300 per cell, enable bacteria to colonize the epithelium of specific host organs. The polypeptide is Fimbrial protein PrsE (prsE) (Escherichia coli).